The chain runs to 859 residues: Probable potassium transporter 14 (859 aa).

The segment covering 1–19 has biased composition (gly residues); it reads METRSGGSGSASGGGGGGR. The disordered stretch occupies residues 1-69; the sequence is METRSGGSGS…SRGGCSDSDD (69 aa). Over 1 to 112 the chain is Cytoplasmic; the sequence is METRSGGSGS…RHQEITVGRS (112 aa). Positions 54–65 are enriched in low complexity; it reads PAAASGSRGGCS. A helical membrane pass occupies residues 113–133; the sequence is IVLAVQTLGVVFGDVGTSPLY. The Extracellular portion of the chain corresponds to 134–155; it reads AFDVMFNKYPITSKEDVLGALS. A helical membrane pass occupies residues 156–176; that stretch reads LVIYTLILIPLLKYTLIALWG. The Cytoplasmic portion of the chain corresponds to 177–240; the sequence is NDDGEGGTFA…RLETSSMLKK (64 aa). A helical transmembrane segment spans residues 241–261; that stretch reads LLLMLVLFGTSMVIADGVVTP. Residues 262-275 are Extracellular-facing; sequence AMSVMSAVNGLKVG. Residues 276–296 form a helical membrane-spanning segment; sequence ISSVNEGEVVMITVAVLIVLF. Residues 297-305 lie on the Cytoplasmic side of the membrane; that stretch reads TLQRFGSSK. The helical transmembrane segment at 306–326 threads the bilayer; it reads VALAVGPALFIWFCCLAGIGI. The Extracellular portion of the chain corresponds to 327-359; sequence YNMKTYGSAVLQAFNPMYIYYYFERNPTQAWMS. Residues 360-380 form a helical membrane-spanning segment; it reads LGGCLLCATGSEAMFADLCYF. Residues 381 to 388 lie on the Cytoplasmic side of the membrane; sequence SVKSVQLT. The chain crosses the membrane as a helical span at residues 389–409; the sequence is FVFLVLPCLLLGYLGQAAFLM. Residues 410 to 417 lie on the Extracellular side of the membrane; it reads ENLTENQQ. N-linked (GlcNAc...) asparagine glycosylation occurs at Asn411. A helical transmembrane segment spans residues 418–438; it reads VFFLSIPNQAFWPVVFIAILA. Residues 439–478 are Cytoplasmic-facing; sequence AIIASRTMTTAIFSTIKQATALGCFPRLKIIHTSRSFMGQ. The helical transmembrane segment at 479–499 threads the bilayer; it reads IYIPMMNWFLLVSCLAFVTMF. Residues 500 to 508 lie on the Extracellular side of the membrane; it reads GSINEIGNA. A helical membrane pass occupies residues 509–531; the sequence is YGIAELGVMMMTTVLVTIIMLLI. Residues 532 to 535 lie on the Cytoplasmic side of the membrane; it reads WQIN. A helical membrane pass occupies residues 536 to 558; that stretch reads IIVVLCFLTLSLGLELIFFSSVL. Residues 559–560 lie on the Extracellular side of the membrane; that stretch reads GS. A helical transmembrane segment spans residues 561 to 581; it reads VADGSWVLLVFAAVLYLIMYI. Residues 582–859 lie on the Cytoplasmic side of the membrane; it reads WNYGTKLKYE…MMQVAMQYMV (278 aa). Positions 752–772 are disordered; sequence GVPPAEAAGTTEHPTIGSSMS. Polar residues predominate over residues 763–772; sequence EHPTIGSSMS.

The protein belongs to the HAK/KUP transporter (TC 2.A.72.3) family.

The protein resides in the membrane. In terms of biological role, high-affinity potassium transporter. The protein is Probable potassium transporter 14 (HAK14) of Oryza sativa subsp. japonica (Rice).